We begin with the raw amino-acid sequence, 524 residues long: GMP synthase [glutamine-hydrolyzing] (524 aa).

A Glutamine amidotransferase type-1 domain is found at 9 to 207 (RILILDFGSQ…VIHICQCIPN (199 aa)). Cys86 serves as the catalytic Nucleophile. Active-site residues include His181 and Glu183. Residues 208–399 (WTTKHIIEDS…LGLPADLIYR (192 aa)) enclose the GMPS ATP-PPase domain. 235–241 (SGGVDSA) is a binding site for ATP.

Homodimer.

The catalysed reaction is XMP + L-glutamine + ATP + H2O = GMP + L-glutamate + AMP + diphosphate + 2 H(+). Its pathway is purine metabolism; GMP biosynthesis; GMP from XMP (L-Gln route): step 1/1. Functionally, catalyzes the synthesis of GMP from XMP. This chain is GMP synthase [glutamine-hydrolyzing], found in Coxiella burnetii (strain CbuG_Q212) (Coxiella burnetii (strain Q212)).